A 306-amino-acid polypeptide reads, in one-letter code: Histone-lysine N-methyltransferase SETMAR (306 aa).

The Pre-SET domain maps to 60–123; the sequence is PGCACLKTPC…RCRNRVVQWG (64 aa). The Zn(2+) site is built by Cys-62, Cys-64, Cys-69, Cys-74, Cys-76, Cys-105, Cys-109, Cys-111, and Cys-115. One can recognise an SET domain in the interval 126 to 250; it reads FHLQVFKTDH…PEEELSYDYS (125 aa). Residues 136–138, Tyr-179, Arg-207, and 210–211 each bind S-adenosyl-L-methionine; these read KGW and NH. Zn(2+)-binding residues include Cys-213, Cys-274, Cys-276, and Cys-281. A Post-SET domain is found at 270-286; that stretch reads LRKPCYCGARSCAAFLP.

This sequence belongs to the class V-like SAM-binding methyltransferase superfamily.

Its subcellular location is the nucleus. The protein resides in the chromosome. It catalyses the reaction L-lysyl(36)-[histone H3] + 2 S-adenosyl-L-methionine = N(6),N(6)-dimethyl-L-lysyl(36)-[histone H3] + 2 S-adenosyl-L-homocysteine + 2 H(+). Histone methyltransferase that methylates 'Lys-4' and 'Lys-36' of histone H3, 2 specific tags for epigenetic transcriptional activation. Specifically mediates dimethylation of H3 'Lys-36'. In Bos taurus (Bovine), this protein is Histone-lysine N-methyltransferase SETMAR.